The sequence spans 493 residues: ATP-dependent RNA helicase dbp3 (493 aa).

Residues 1–38 (MTKRDYQNDTTAESRPTKKSKGEKKVKETKEKKEKKVK) are disordered. Positions 23-34 (EKKVKETKEKKE) are enriched in basic and acidic residues. The short motif at 97-105 (SFKSPTSIQ) is the Q motif element. Residues 109 to 285 (WPLLFGGRDV…STFMSSPVTV (177 aa)) form the Helicase ATP-binding domain. 122 to 129 (AETGSGKT) serves as a coordination point for ATP. The DEAD box signature appears at 232-235 (DEAD). A Helicase C-terminal domain is found at 316-462 (RLVQLLKQHQ…EVPEELLKFG (147 aa)).

This sequence belongs to the DEAD box helicase family. DDX5/DBP2 subfamily.

The protein localises to the nucleus. Its subcellular location is the nucleolus. It catalyses the reaction ATP + H2O = ADP + phosphate + H(+). Its function is as follows. ATP-dependent RNA helicase required for 60S ribosomal subunit synthesis. Involved in efficient pre-rRNA processing, predominantly at site A3, which is necessary for the normal formation of 25S and 5.8S rRNAs. This is ATP-dependent RNA helicase dbp3 (dbp3) from Aspergillus terreus (strain NIH 2624 / FGSC A1156).